A 308-amino-acid polypeptide reads, in one-letter code: ADP-L-glycero-D-manno-heptose-6-epimerase (308 aa).

Residues 10-11 (FI), 31-32 (DN), Lys-38, Lys-53, 75-79 (EGACS), and Asn-92 each bind NADP(+). The active-site Proton acceptor is the Tyr-139. Lys-143 is an NADP(+) binding site. Position 168 (Asn-168) interacts with substrate. NADP(+)-binding residues include Val-169 and Lys-177. The Proton acceptor role is filled by Lys-177. Substrate contacts are provided by residues Ser-179, His-186, 200 to 203 (FAGS), Arg-208, and Tyr-271.

This sequence belongs to the NAD(P)-dependent epimerase/dehydratase family. HldD subfamily. In terms of assembly, homopentamer. NADP(+) serves as cofactor.

The catalysed reaction is ADP-D-glycero-beta-D-manno-heptose = ADP-L-glycero-beta-D-manno-heptose. The protein operates within nucleotide-sugar biosynthesis; ADP-L-glycero-beta-D-manno-heptose biosynthesis; ADP-L-glycero-beta-D-manno-heptose from D-glycero-beta-D-manno-heptose 7-phosphate: step 4/4. In terms of biological role, catalyzes the interconversion between ADP-D-glycero-beta-D-manno-heptose and ADP-L-glycero-beta-D-manno-heptose via an epimerization at carbon 6 of the heptose. This chain is ADP-L-glycero-D-manno-heptose-6-epimerase, found in Actinobacillus succinogenes (strain ATCC 55618 / DSM 22257 / CCUG 43843 / 130Z).